Consider the following 655-residue polypeptide: Macrolide export ATP-binding/permease protein MacB (655 aa).

The region spanning Ile6–Gln244 is the ABC transporter domain. Gly42–Ser49 contributes to the ATP binding site. The next 4 membrane-spanning stretches (helical) occupy residues Phe279–Gly299, Leu528–Met548, Phe579–Tyr599, and Ala618–Leu638.

This sequence belongs to the ABC transporter superfamily. Macrolide exporter (TC 3.A.1.122) family. As to quaternary structure, homodimer.

The protein resides in the cell inner membrane. Non-canonical ABC transporter that contains transmembrane domains (TMD), which form a pore in the inner membrane, and an ATP-binding domain (NBD), which is responsible for energy generation. Confers resistance against macrolides. The chain is Macrolide export ATP-binding/permease protein MacB from Rhodopseudomonas palustris (strain BisB18).